We begin with the raw amino-acid sequence, 379 residues long: Putative nickel insertion protein (379 aa).

Belongs to the LarC family.

The protein is Putative nickel insertion protein of Methanocaldococcus jannaschii (strain ATCC 43067 / DSM 2661 / JAL-1 / JCM 10045 / NBRC 100440) (Methanococcus jannaschii).